Consider the following 214-residue polypeptide: MSLGLVGRKVGMTRIFAEDGRSVPVTVLDVSNNRVTQIKTPESDGYAAVQVTFGKRRASRVGKPLAGHLAKAGVEAGHMLKEFRVETEQVAGFKAGDVVGVDLFAVGQKVDVTGTSIGKGFSGVGKRHNFSSNRASHGNSVSHNAPGSIGMAQDPGRVFPGKRMAGQYGNTTCTTQGLEVVRVDVERQLLLVKGAVPGSKGGDVIVRPAVKARG.

An N5-methylglutamine modification is found at Gln153.

The protein belongs to the universal ribosomal protein uL3 family. As to quaternary structure, part of the 50S ribosomal subunit. Forms a cluster with proteins L14 and L19. In terms of processing, methylated by PrmB.

Functionally, one of the primary rRNA binding proteins, it binds directly near the 3'-end of the 23S rRNA, where it nucleates assembly of the 50S subunit. In Aromatoleum aromaticum (strain DSM 19018 / LMG 30748 / EbN1) (Azoarcus sp. (strain EbN1)), this protein is Large ribosomal subunit protein uL3.